The chain runs to 261 residues: Kallikrein 1-related peptidase b3 (261 aa).

A signal peptide spans Met1–Ala18. The propeptide at Pro19–Arg24 is activation peptide. The interval Ile25–Arg107 is segment B1. The Peptidase S1 domain occupies Ile25–Ala258. Intrachain disulfides connect Cys31-Cys173, Cys50-Cys66, Cys152-Cys219, Cys184-Cys198, and Cys209-Cys234. Residue His65 is the Charge relay system of the active site. N-linked (GlcNAc...) asparagine glycosylation is present at Asn102. The tract at residues Phe112–Lys164 is segment C. Residues Phe112–Pro261 form a segment A region. Residue Asp120 is the Charge relay system of the active site. A segment B2 region spans residues Phe165 to Pro261. Residue Ser213 is the Charge relay system of the active site. Residues His231 and Glu236 each contribute to the Zn(2+) site.

The protein belongs to the peptidase S1 family. Kallikrein subfamily. In terms of assembly, 7S nerve growth factor is composed of two alpha chains, a beta dimer composed of identical chains, and two gamma chains. The cofactor is Zn(2+).

The catalysed reaction is Preferential cleavage of Arg-|-Xaa bonds in small molecule substrates. Highly selective action to release kallidin (lysyl-bradykinin) from kininogen involves hydrolysis of Met-|-Xaa or Leu-|-Xaa.. In terms of biological role, 7S NGF alpha chain stabilizes the 7S complex. The beta dimer promotes neurite growth. The gamma chain is an arginine-specific protease; it may also have plasminogen activator activity, as well as mitogenic activity for chick embryo fibroblasts. This chain is Kallikrein 1-related peptidase b3 (Klk1b3), found in Mus musculus (Mouse).